The sequence spans 299 residues: Beta-lactamase VEB-1 (299 aa).

The signal sequence occupies residues 1–23 (MKIVKRILLVLLSLFFTIVYSNA). Catalysis depends on S68, which acts as the Nucleophile; acyl-ester intermediate. Residues K71, S131, and E167 each contribute to the a beta-lactam site. The Proton acceptor role is filled by E167.

Belongs to the class-A beta-lactamase family.

The enzyme catalyses a beta-lactam + H2O = a substituted beta-amino acid. With respect to regulation, inhibited by the beta-lactamase-blocking agent clavulanic acid. Functionally, class A beta-lactamase which confers resistance to the beta-lactam antibiotics, including penicillins and cephalosporins, in E.coli strain JM109. Acts via hydrolysis of the beta-lactam ring. Has penicillin-, and cephalosporin-hydrolyzing activities. This chain is Beta-lactamase VEB-1, found in Pseudomonas aeruginosa.